The sequence spans 537 residues: Probable protein kinase UbiB (537 aa).

A helical transmembrane segment spans residues L30–L47. The region spanning R126–L490 is the Protein kinase domain. Residues L132 to V140 and K154 each bind ATP. The active-site Proton acceptor is the D289. The next 2 helical transmembrane spans lie at L489–Q507 and A513–V530.

Belongs to the ABC1 family. UbiB subfamily.

The protein localises to the cell inner membrane. Its pathway is cofactor biosynthesis; ubiquinone biosynthesis [regulation]. Its function is as follows. Is probably a protein kinase regulator of UbiI activity which is involved in aerobic coenzyme Q (ubiquinone) biosynthesis. The chain is Probable protein kinase UbiB from Azotobacter vinelandii (strain DJ / ATCC BAA-1303).